Here is a 248-residue protein sequence, read N- to C-terminus: Probable transcriptional regulatory protein PSPTO_3980 (248 aa).

It belongs to the TACO1 family.

Its subcellular location is the cytoplasm. The sequence is that of Probable transcriptional regulatory protein PSPTO_3980 from Pseudomonas syringae pv. tomato (strain ATCC BAA-871 / DC3000).